The primary structure comprises 254 residues: Allene oxide cyclase 1, chloroplastic (254 aa).

The N-terminal 78 residues, 1–78, are a transit peptide targeting the chloroplast; that stretch reads MASSTISLQS…QNLGNTENPR (78 aa). Residues 44–56 show a composition bias toward low complexity; that stretch reads SNGPGSSSPTSFT. Residues 44 to 79 form a disordered region; sequence SNGPGSSSPTSFTPKKKLTPTRALSQNLGNTENPRP. Over residues 65 to 77 the composition is skewed to polar residues; it reads RALSQNLGNTENP.

The protein belongs to the allene oxide cyclase family. Highly expressed in fully developed leaves.

The protein localises to the plastid. The protein resides in the chloroplast. It carries out the reaction (9Z,13S,15Z)-12,13-epoxyoctadeca-9,11,15-trienoate = (9S,13S,15Z)-12-oxophyto-10,15-dienoate. Involved in the production of 12-oxo-phytodienoic acid (OPDA), a precursor of jasmonic acid. This Arabidopsis thaliana (Mouse-ear cress) protein is Allene oxide cyclase 1, chloroplastic (AOC1).